Consider the following 238-residue polypeptide: tRNA (guanine-N(7)-)-methyltransferase (238 aa).

Polar residues predominate over residues 1–12 (MTDTAENQTPND). Residues 1-20 (MTDTAENQTPNDRQAGHPRS) are disordered. Residues Glu70, Asp95, Asp122, and Asp145 each contribute to the S-adenosyl-L-methionine site. The active site involves Asp145. Residues Lys149, Asp181, and 216-219 (TKFE) each bind substrate.

It belongs to the class I-like SAM-binding methyltransferase superfamily. TrmB family.

It catalyses the reaction guanosine(46) in tRNA + S-adenosyl-L-methionine = N(7)-methylguanosine(46) in tRNA + S-adenosyl-L-homocysteine. Its pathway is tRNA modification; N(7)-methylguanine-tRNA biosynthesis. Catalyzes the formation of N(7)-methylguanine at position 46 (m7G46) in tRNA. This is tRNA (guanine-N(7)-)-methyltransferase from Neisseria meningitidis serogroup C (strain 053442).